The sequence spans 209 residues: ATP-dependent Clp protease proteolytic subunit (209 aa).

Residue Ser106 is the Nucleophile of the active site. His131 is an active-site residue.

It belongs to the peptidase S14 family. Fourteen ClpP subunits assemble into 2 heptameric rings which stack back to back to give a disk-like structure with a central cavity, resembling the structure of eukaryotic proteasomes.

The protein resides in the cytoplasm. The catalysed reaction is Hydrolysis of proteins to small peptides in the presence of ATP and magnesium. alpha-casein is the usual test substrate. In the absence of ATP, only oligopeptides shorter than five residues are hydrolyzed (such as succinyl-Leu-Tyr-|-NHMec, and Leu-Tyr-Leu-|-Tyr-Trp, in which cleavage of the -Tyr-|-Leu- and -Tyr-|-Trp bonds also occurs).. In terms of biological role, cleaves peptides in various proteins in a process that requires ATP hydrolysis. Has a chymotrypsin-like activity. Plays a major role in the degradation of misfolded proteins. The sequence is that of ATP-dependent Clp protease proteolytic subunit from Caulobacter vibrioides (strain ATCC 19089 / CIP 103742 / CB 15) (Caulobacter crescentus).